Consider the following 205-residue polypeptide: MSAIAPGMILFAYLCGSISSAILVCRIAGLPDPRESGSGNPGATNVLRIGGKGAAVAVLIFDILKGMLPVWGAYALGVTPFWLGLIAIAACLGHIWPVFFGFKGGKGVATAFGAIAPIGWDLTGVMAGTWLLTVLLSGYSSLGAIVSALIAPFYVWWFKPQFTFPVSMLSCLILLRHHDNIQRLWRRQETKIWTKLKKKRQKDSE.

Residues 1 to 3 are Periplasmic-facing; that stretch reads MSA. A helical transmembrane segment spans residues 4 to 24; the sequence is IAPGMILFAYLCGSISSAILV. The Cytoplasmic segment spans residues 25–52; that stretch reads CRIAGLPDPRESGSGNPGATNVLRIGGK. Residues 53 to 73 form a helical membrane-spanning segment; that stretch reads GAAVAVLIFDILKGMLPVWGA. The Periplasmic segment spans residues 74 to 80; sequence YALGVTP. A helical transmembrane segment spans residues 81–101; sequence FWLGLIAIAACLGHIWPVFFG. At 102–111 the chain is on the cytoplasmic side; the sequence is FKGGKGVATA. Residues 112-132 form a helical membrane-spanning segment; sequence FGAIAPIGWDLTGVMAGTWLL. Residues 133-137 are Periplasmic-facing; the sequence is TVLLS. A helical transmembrane segment spans residues 138 to 158; sequence GYSSLGAIVSALIAPFYVWWF. Over 159 to 205 the chain is Cytoplasmic; that stretch reads KPQFTFPVSMLSCLILLRHHDNIQRLWRRQETKIWTKLKKKRQKDSE.

The protein belongs to the PlsY family. Probably interacts with PlsX.

Its subcellular location is the cell inner membrane. It catalyses the reaction sn-glycerol 3-phosphate + an acyl-CoA = a 1-acyl-sn-glycero-3-phosphate + CoA. It carries out the reaction a fatty acyl-[ACP] + sn-glycerol 3-phosphate = a 1-acyl-sn-glycero-3-phosphate + holo-[ACP]. It functions in the pathway lipid metabolism; phospholipid metabolism. Catalyzes the transfer of an acyl group from acyl-ACP to glycerol-3-phosphate (G3P) to form lysophosphatidic acid (LPA). This enzyme can also utilize acyl-CoA as fatty acyl donor, but not acyl-PO(4). This is Glycerol-3-phosphate acyltransferase from Salmonella schwarzengrund (strain CVM19633).